A 156-amino-acid polypeptide reads, in one-letter code: Small ribosomal subunit protein uS7 (156 aa).

It belongs to the universal ribosomal protein uS7 family. In terms of assembly, part of the 30S ribosomal subunit. Contacts proteins S9 and S11.

In terms of biological role, one of the primary rRNA binding proteins, it binds directly to 16S rRNA where it nucleates assembly of the head domain of the 30S subunit. Is located at the subunit interface close to the decoding center, probably blocks exit of the E-site tRNA. The polypeptide is Small ribosomal subunit protein uS7 (Thiobacillus denitrificans (strain ATCC 25259 / T1)).